Here is a 757-residue protein sequence, read N- to C-terminus: MADSSSSLHPLCERISHKSYVLRAVDLTILGLLYSLLLYRILHISENDNVWLLAFFCESCFSLVWLIFTCLKWSPAEDIPYINTLNERVHDLPSLDMFVPTADTVRESPIITVNTVLSLLAVNYPANKLACYVSDDGCSPLTYFSLKEASKFVKIWAPFCKKYNVRVRAPFRYFLNPLVATDDSVFSKDWKMMKREYVKLCRKVEDATGDSHWLDADDDFEAFSNTKPNDHSTIVKVVWENKGGVGDEKEVPHLVYISREKRPNYLHHYKTGAMNFLLRVSGLMTNAPYTLNVDCDMYANEPDVVRQAMCVFLQNSKNSNHCAFVQFPQKFYDSYTNELAVLQSILGRGVAGIQGPFYIGTGCFHTRRVMYGLSSDDLEDNGNISQVATREFLAEDSLVRKYGNSKELVKSVVDALQRKSNPQKSLANLIEAAQEVGHCHYEYQTSWGNLGWMYDSVAEDINTSVGIHLRGWTSSFISPDPPAFIGSTPTLGLEAIVQQRRWATGAIEVLFNKQSPFMGMFHGKIKFRQRLAYFWALMCLRSIPELIYCLLPAYCLLHDSALFPKGPCLCTIVTLVGMHCLYSLWQFMSLGFSVQSWYVVQSLWRIIATSSWLFSIQDIILKLLGISQIGFVIAKKTIPETKSVYESKPSQGEDDVPKLNLGKFEFDSSGLFIPGTFIMLVNLAALAGYLVRLQRSSCSHGGGGSGLAEACGCILVVMLFLPFLKGLFEHGKYSIPLSTLSKAAFLTVLFVFFCVGK.

A run of 2 helical transmembrane segments spans residues 24–44 (AVDL…ILHI) and 50–70 (VWLL…IFTC). Residues Asp136 and Asp460 contribute to the active site. Transmembrane regions (helical) follow at residues 531-551 (LAYF…YCLL), 572-592 (IVTL…SLGF), 613-633 (LFSI…GFVI), 671-691 (LFIP…GYLV), 704-724 (GSGL…LPFL), and 735-755 (IPLS…FFCV).

Belongs to the glycosyltransferase 2 family. Plant cellulose synthase-like B subfamily. As to expression, expressed in young seedlings, primarily in the vascular tissue. Expressed in the root cap.

It localises to the golgi apparatus membrane. Thought to be a Golgi-localized beta-glycan synthase that polymerize the backbones of noncellulosic polysaccharides (hemicelluloses) of plant cell wall. The sequence is that of Cellulose synthase-like protein B5 (CSLB5) from Arabidopsis thaliana (Mouse-ear cress).